A 382-amino-acid polypeptide reads, in one-letter code: MDNLFTFLHEIEDRYTRTIFNFHLISCDEIGDIYGLMKERISSEDMFDNIVYNKDIHPAIKKLVYCDIQLTKHIINQNTYPVFNDSSQVKCCHYFDINSDNSNISSRTVEIFEREKSSLVSYIKTTNKKRKVNYGEIKKTVHGGTNANYFSGKKSDEYLSTTVRSNINQPWIKTISKRMRVNIINHSIVTRGKSSILQTIEIIFTNRTCVKIFKDSTMHIILSKDKDEKGCIHMIDKLFYVYYNLFLLFEDIIQNEYFKEVANVVNHVLTATALDEKLFLIKKMAKHDVYGVSNFKIGMFNLTFIKSLDHTVFPSLLDEDSKIKFFKGKKLNIVALRSLEDCINYVTKSENMIEMMKERSTILNSIDIETESVDRLKDLLLK.

It belongs to the orthopoxvirus OPG150 family. Heterodimerizes with protein A8 to form the virus intermediate transcription factor (VITF)-3.

Acts with RNA polymerase to initiate transcription from intermediate gene promoters. The chain is Intermediate transcription factor 3 large subunit (OPG150) from Homo sapiens (Human).